Reading from the N-terminus, the 300-residue chain is Cation-efflux pump FieF (300 aa).

Residues 24–44 (LLIKIFAWWYTGSVSILAALV) form a helical membrane-spanning segment. Positions 45 and 49 each coordinate Zn(2+). The next 2 membrane-spanning stretches (helical) occupy residues 82–102 (AALA…LTGI) and 114–134 (AGVG…LVTF). Zn(2+)-binding residues include His-153 and Asp-157. 2 consecutive transmembrane segments (helical) span residues 156 to 176 (SDVM…YGWH) and 178 to 198 (ADAL…LRMG).

The protein belongs to the cation diffusion facilitator (CDF) transporter (TC 2.A.4) family. FieF subfamily. In terms of assembly, homodimer.

It localises to the cell inner membrane. It catalyses the reaction Zn(2+)(in) + H(+)(out) = Zn(2+)(out) + H(+)(in). It carries out the reaction Cd(2+)(in) + H(+)(out) = Cd(2+)(out) + H(+)(in). The catalysed reaction is Fe(2+)(in) + H(+)(out) = Fe(2+)(out) + H(+)(in). Its function is as follows. Divalent metal cation transporter which exports Zn(2+), Cd(2+) and possibly Fe(2+). May be involved in zinc and iron detoxification by efflux. The sequence is that of Cation-efflux pump FieF from Klebsiella pneumoniae subsp. pneumoniae (strain ATCC 700721 / MGH 78578).